The chain runs to 557 residues: Formate--tetrahydrofolate ligase (557 aa).

Position 65–72 (65–72 (TPAGEGKT)) interacts with ATP.

The protein belongs to the formate--tetrahydrofolate ligase family.

The enzyme catalyses (6S)-5,6,7,8-tetrahydrofolate + formate + ATP = (6R)-10-formyltetrahydrofolate + ADP + phosphate. Its pathway is one-carbon metabolism; tetrahydrofolate interconversion. The polypeptide is Formate--tetrahydrofolate ligase (Methylobacterium radiotolerans (strain ATCC 27329 / DSM 1819 / JCM 2831 / NBRC 15690 / NCIMB 10815 / 0-1)).